The primary structure comprises 853 residues: Aminotransferase PigE (853 aa).

A pyridoxal 5'-phosphate-binding site is contributed by 503-504 (GT). Lys-645 bears the N6-(pyridoxal phosphate)lysine mark. Residue Thr-680 participates in pyridoxal 5'-phosphate binding.

It belongs to the class-III pyridoxal-phosphate-dependent aminotransferase family. In terms of assembly, homodimer. The cofactor is pyridoxal 5'-phosphate.

Its pathway is antibiotic biosynthesis; prodigiosin biosynthesis. In terms of biological role, involved in the biosynthesis of 2-methyl-3-n-amyl-pyrrole (MAP), one of the terminal products involved in the biosynthesis of the red antibiotic prodigiosin (Pig). Catalyzes the transamination to the aldehyde group of 3-acetyloctanal, resulting in an aminoketone, which spontaneously cyclizes to yield the dihydro form of MAP (H2MAP). In Serratia sp. (strain FS14), this protein is Aminotransferase PigE.